The sequence spans 139 residues: Ribonuclease P/MRP protein subunit POP5 (139 aa).

The protein belongs to the eukaryotic/archaeal RNase P protein component 2 family.

It localises to the nucleus. The enzyme catalyses Endonucleolytic cleavage of RNA, removing 5'-extranucleotides from tRNA precursor.. In terms of biological role, component of ribonuclease P, a protein complex that generates mature tRNA molecules by cleaving their 5'-ends. Also a component of RNase MRP, which cleaves pre-rRNA sequences. The sequence is that of Ribonuclease P/MRP protein subunit POP5 from Schizosaccharomyces pombe (strain 972 / ATCC 24843) (Fission yeast).